A 622-amino-acid polypeptide reads, in one-letter code: MMEPPLSKRNPPALRLADLATAQAQQLQNMTGFPVLVGPPAHSQRRAVAMHLHPRDLGTDPGVASTALGPEHMAQASGQGPCPPSQGLPGLFQVPAPAARSVASGTHPGARTHPDGGGSSGAQASAPPPPAPPLPPSQSSSPPPPPPPPPALSGYTATNSGGGSSSGKGHSRDFVLRRDLSATAPAAAMHGAPLGGEQRSGSSSPQHPTPPPHPAGMFISASGTYAGRDGGGSALFPALHDSPGAPGGHPLNGQMRLGLAAAAAAAAELYGRAEPPFAPRSGDAHYGAVAAAAAAALHGYGAVNLNLNLAAAAAAAAAAGPGPHLQHHAPPPAPPPAPAPHPHHPHLPGAAGAFLRYMRQPIKRELICKWLDPEELAGPPASADSGVKPCSKTFGTMHELVNHVTVEHVGGPEQSSHVCFWEDCPREGKPFKAKYKLINHIRVHTGEKPFPCPFPGCGKVFARSENLKIHKRTHTGEKPFKCEFDGCDRKFANSSDRKKHSHVHTSDKPYYCKIRGCDKSYTHPSSLRKHMKIHCKSPPPSPGALGYSSVGTPVGDPLSPVLDPTRSRSSTLSPQVTNLNEWYVCQASGAPSHLHTPSSNGTTSESEDEEMYGNPEVMRTIH.

4 disordered regions span residues 50 to 171, 190 to 223, 232 to 251, and 321 to 349; these read MHLH…KGHS, HGAP…SASG, GSAL…GHPL, and PGPH…HLPG. A compositionally biased stretch (pro residues) spans 126–151; sequence APPPPAPPLPPSQSSSPPPPPPPPPA. Residues 329 to 340 show a composition bias toward pro residues; sequence APPPAPPPAPAP. The C2H2-type 1; degenerate zinc finger occupies 422-444; it reads EDCPREGKPFKAKYKLINHIRVH. 3 consecutive C2H2-type zinc fingers follow at residues 450 to 474, 480 to 504, and 510 to 534; these read FPCP…KRTH, FKCE…SHVH, and YYCK…MKIH. 2 disordered regions span residues 531–573 and 590–622; these read MKIH…STLS and APSH…RTIH. A phosphoserine mark is found at S537, S541, and S559. Residues 595–604 show a composition bias toward polar residues; the sequence is HTPSSNGTTS.

The protein belongs to the GLI C2H2-type zinc-finger protein family.

The protein resides in the nucleus. Essential for neural crest development, converting cells from an epidermal fate to a neural crest cell fate. Binds to DNA. This is Zinc finger protein ZIC 5 (Zic5) from Mus musculus (Mouse).